Here is a 436-residue protein sequence, read N- to C-terminus: DEAD-box ATP-dependent RNA helicase CshB (436 aa).

The Q motif motif lies at 4–32 (QTFTQYDFKPFLIDAVRELRFTEPTGIQQ). The 175-residue stretch at 35 to 209 (FPVVKKGVSV…KKYMENPEHI (175 aa)) folds into the Helicase ATP-binding domain. 48 to 55 (SQTGSGKT) is a binding site for ATP. The DEAD box signature appears at 157 to 160 (DEAD). The 149-residue stretch at 240–388 (MLLQFKPYLA…WADLGERRRR (149 aa)) folds into the Helicase C-terminal domain. The disordered stretch occupies residues 385–436 (RRRRKSRKKPNDELDVMATKVIKKPKKVKPNYKRKLATERDKVKRKYSNKKR). 2 stretches are compositionally biased toward basic residues: residues 405–419 (VIKK…YKRK) and 427–436 (VKRKYSNKKR).

It belongs to the DEAD box helicase family. CshB subfamily.

The protein localises to the cytoplasm. It catalyses the reaction ATP + H2O = ADP + phosphate + H(+). Probable DEAD-box RNA helicase. May work in conjunction with the cold shock proteins to ensure proper initiation of transcription at low and optimal temperatures. Unwinds dsRNA in both 5'- and 3'-directions and shows RNA-dependent ATPase activity. Probably has a somewhat redundant function with CshA, as cshA can partially complement the growth effects of a cshB deletion. The sequence is that of DEAD-box ATP-dependent RNA helicase CshB from Bacillus cereus (strain ATCC 14579 / DSM 31 / CCUG 7414 / JCM 2152 / NBRC 15305 / NCIMB 9373 / NCTC 2599 / NRRL B-3711).